The following is a 369-amino-acid chain: S-(hydroxymethyl)glutathione dehydrogenase (369 aa).

Zn(2+) contacts are provided by Cys40, His62, Cys92, Cys95, Cys98, Cys106, and Cys169.

The protein belongs to the zinc-containing alcohol dehydrogenase family. Class-III subfamily. Homodimer. Zn(2+) is required as a cofactor.

It localises to the cytoplasm. The catalysed reaction is S-(hydroxymethyl)glutathione + NADP(+) = S-formylglutathione + NADPH + H(+). The enzyme catalyses S-(hydroxymethyl)glutathione + NAD(+) = S-formylglutathione + NADH + H(+). It catalyses the reaction a primary alcohol + NAD(+) = an aldehyde + NADH + H(+). It carries out the reaction a secondary alcohol + NAD(+) = a ketone + NADH + H(+). The catalysed reaction is S-nitrosoglutathione + NADH + H(+) = S-(hydroxysulfenamide)glutathione + NAD(+). In terms of biological role, has high formaldehyde dehydrogenase activity in the presence of glutathione and catalyzes the oxidation of normal alcohols in a reaction that is not GSH-dependent. In addition, hemithiolacetals other than those formed from GSH, including omega-thiol fatty acids, also are substrates. Also acts as a S-nitroso-glutathione reductase by catalyzing the NADH-dependent reduction of S-nitrosoglutathione. In Synechocystis sp. (strain ATCC 27184 / PCC 6803 / Kazusa), this protein is S-(hydroxymethyl)glutathione dehydrogenase (frmA).